A 229-amino-acid chain; its full sequence is Non-structural protein P8 (229 aa).

2 consecutive transmembrane segments (helical) span residues 119–139 (IIHMTLLIAAVVALLTSVCTL) and 162–182 (SLNPMLGVVNLGATFLMMVCA).

Belongs to the orbivirus NS3 family. As to quaternary structure, forms homooligomers via coiled-coil motif. Interacts with host OPTN; this interaction inhibits innate immune response.

It localises to the host cell membrane. The protein resides in the host Golgi apparatus. Functionally, plays a role in the inhibition of host innate immune response. Interacts with host OPTN and thus inhibits the recruitment of TBK1 to the host Golgi apparatus. In turn, downstream partner IRF3 cannot be activated and IFN-beta production is impaired. Facilitates viral particle release either by increasing plasma membrane permeability through a viroporin-like activity or by viral budding. In Bluetongue virus 17 (isolate USA) (BTV 17), this protein is Non-structural protein P8 (Segment-10).